A 278-amino-acid polypeptide reads, in one-letter code: NADPH-dependent 7-cyano-7-deazaguanine reductase (278 aa).

Residue 87–89 (IES) participates in substrate binding. 89-90 (SK) lines the NADPH pocket. Cys-185 serves as the catalytic Thioimide intermediate. Asp-192 functions as the Proton donor in the catalytic mechanism. 224–225 (HE) contacts substrate. 253-254 (RG) provides a ligand contact to NADPH. Residues 255-278 (GLDINPYRSTNPTFSVQNHRSFRQ) form a disordered region. Residues 261–278 (YRSTNPTFSVQNHRSFRQ) show a composition bias toward polar residues.

This sequence belongs to the GTP cyclohydrolase I family. QueF type 2 subfamily. In terms of assembly, homodimer.

It localises to the cytoplasm. The catalysed reaction is 7-aminomethyl-7-carbaguanine + 2 NADP(+) = 7-cyano-7-deazaguanine + 2 NADPH + 3 H(+). The protein operates within tRNA modification; tRNA-queuosine biosynthesis. Functionally, catalyzes the NADPH-dependent reduction of 7-cyano-7-deazaguanine (preQ0) to 7-aminomethyl-7-deazaguanine (preQ1). In Coxiella burnetii (strain CbuG_Q212) (Coxiella burnetii (strain Q212)), this protein is NADPH-dependent 7-cyano-7-deazaguanine reductase.